A 265-amino-acid polypeptide reads, in one-letter code: Early E4 31 kDa protein (265 aa).

Belongs to the adenoviridae E4 30 to 34 kDa protein family. In terms of assembly, interacts with E1B-55k.

It localises to the host nucleus. The protein localises to the host cytoplasm. Plays a major role to prevent cellular inhibition of viral genome replication by nuclear bodies. Assembles an SCF-like E3 ubiquitin ligase complex based on the cellular proteins ELOB, ELOC, CUL5 and RBX1, in cooperation with viral E1B-55K. This viral RING-type ligase ubiquitinates cellular substrates prior to proteasomal degradation: p53/TP53, LIG4, MRE11-RAD50-NBS1 (MRN) complex, ITGA3, DAXX and BLM. This is Early E4 31 kDa protein from Canine adenovirus serotype 1 (strain RI261) (CAdV-1).